Consider the following 242-residue polypeptide: Probable transcriptional regulatory protein XAC3151 (242 aa).

The protein belongs to the TACO1 family.

It is found in the cytoplasm. The protein is Probable transcriptional regulatory protein XAC3151 of Xanthomonas axonopodis pv. citri (strain 306).